Here is a 407-residue protein sequence, read N- to C-terminus: MSRYHTFTAADAVEYARQFGQVADPQALVTADEIGDGNLNLVFKIRDTAGISRVIVKQALPYVRCVGESWPLTLDRARIEAETLLTHSQFCPQHTVKVLHHDAELAVMVQEDLSDHHIWRHELIQGNYYPQAAEQLGEYLAQTLFHTSDFYQSAQAKKAAVSRYTNPELCQITEDLFFTDPYIEHERNNFDPVLLPEVLSLRQDKALKLAVASLKHRFLSQAEALLHGDIHSGSIFVADGRLKTIDAEFGFYGPIGFDIGTALGNLLLNYCGLPGLAGPRDAAAGREQRLNDVQTVWQTFAARFLALSQEKAQDPALATEGYAAQFLQHVWRDAIGYCGSELIRRTIGLAHVADLDSIDDQEMRRACQRHALSLGRALILVAPHVDDVGGVVARIRQSPSSLTPQRC.

ATP-binding positions include N40, K57, and 111–113 (EDL). Residue D229 coordinates substrate. 246–248 (DAE) is an ATP binding site. R344 is a binding site for substrate.

It belongs to the methylthioribose kinase family. Homodimer.

It carries out the reaction 5-(methylsulfanyl)-D-ribose + ATP = 5-(methylsulfanyl)-alpha-D-ribose 1-phosphate + ADP + H(+). It functions in the pathway amino-acid biosynthesis; L-methionine biosynthesis via salvage pathway; S-methyl-5-thio-alpha-D-ribose 1-phosphate from S-methyl-5'-thioadenosine (hydrolase route): step 2/2. Its function is as follows. Catalyzes the phosphorylation of methylthioribose into methylthioribose-1-phosphate. This Yersinia pseudotuberculosis serotype O:3 (strain YPIII) protein is Methylthioribose kinase.